Here is a 321-residue protein sequence, read N- to C-terminus: UDP-N-acetylenolpyruvoylglucosamine reductase (321 aa).

An FAD-binding PCMH-type domain is found at Phe36 to Glu203. The active site involves Arg183. The active-site Proton donor is Ser232. Glu302 is an active-site residue.

Belongs to the MurB family. The cofactor is FAD.

Its subcellular location is the cytoplasm. The enzyme catalyses UDP-N-acetyl-alpha-D-muramate + NADP(+) = UDP-N-acetyl-3-O-(1-carboxyvinyl)-alpha-D-glucosamine + NADPH + H(+). It functions in the pathway cell wall biogenesis; peptidoglycan biosynthesis. Functionally, cell wall formation. The protein is UDP-N-acetylenolpyruvoylglucosamine reductase of Agrobacterium fabrum (strain C58 / ATCC 33970) (Agrobacterium tumefaciens (strain C58)).